The chain runs to 206 residues: Casparian strip membrane protein 1 (206 aa).

At Ala-2 the chain carries N-acetylalanine. Topologically, residues 2–43 are cytoplasmic; it reads AKESTTIDVGEPSTVTKSSSHVVKDAKKKGFVAVASRGGAKR. The chain crosses the membrane as a helical span at residues 44–64; it reads GLAIFDFLLRLAAIAVTIGAA. The Extracellular segment spans residues 65-95; sequence SVMYTAEETLPFFTQFLQFQAGYDDLPAFQY. The chain crosses the membrane as a helical span at residues 96–116; it reads FVIAVAVVASYLVLSLPFSIV. Residues 117-127 lie on the Cytoplasmic side of the membrane; sequence SIVRPHAVAPR. Residues 128-148 traverse the membrane as a helical segment; that stretch reads LILLICDTLVVTLNTSAAAAA. At 149–180 the chain is on the extracellular side; the sequence is ASITYLAHNGNQSTNWLPICQQFGDFCQNVST. Residues Asn-159 and Asn-177 are each glycosylated (N-linked (GlcNAc...) asparagine). A helical membrane pass occupies residues 181–201; the sequence is AVVADSIAILFFIVLIIISAI. Residues 202–206 lie on the Cytoplasmic side of the membrane; it reads ALKRH.

This sequence belongs to the Casparian strip membrane proteins (CASP) family. In terms of assembly, homodimer and heterodimers with other CASP proteins. Interacts with CASP2, CASP3, CASP4 and CASP5.

The protein resides in the cell membrane. Functionally, regulates membrane-cell wall junctions and localized cell wall deposition. Required for establishment of the Casparian strip membrane domain (CSD) and the subsequent formation of Casparian strips, a cell wall modification of the root endodermis that determines an apoplastic barrier between the intraorganismal apoplasm and the extraorganismal apoplasm and prevents lateral diffusion. This chain is Casparian strip membrane protein 1 (CASP1), found in Arabidopsis thaliana (Mouse-ear cress).